The primary structure comprises 313 residues: Ribosomal RNA small subunit methyltransferase H (313 aa).

Residues 35–37 (GGH), Asp-55, Phe-79, Asp-101, and Gln-108 contribute to the S-adenosyl-L-methionine site.

Belongs to the methyltransferase superfamily. RsmH family.

It localises to the cytoplasm. The enzyme catalyses cytidine(1402) in 16S rRNA + S-adenosyl-L-methionine = N(4)-methylcytidine(1402) in 16S rRNA + S-adenosyl-L-homocysteine + H(+). Its function is as follows. Specifically methylates the N4 position of cytidine in position 1402 (C1402) of 16S rRNA. This chain is Ribosomal RNA small subunit methyltransferase H, found in Klebsiella pneumoniae subsp. pneumoniae (strain ATCC 700721 / MGH 78578).